A 613-amino-acid polypeptide reads, in one-letter code: Zinc finger protein 665 (613 aa).

18 consecutive C2H2-type zinc fingers follow at residues 113–135 (YKCDECGKVFNQNSRLTSHKRIH), 141–163 (YRCNECGKAFTVRSNLTIHQVIH), 169–191 (YKCNECGKVFSQPSNLAGHQRIH), 197–219 (YKCNECGKAFRAHSKLTTHQVIH), 225–247 (YKCNECGKCFTQNSHLASHRRIH), 253–275 (YKCNECGKAFSVRSSLTTHQTIH), 281–303 (YKCNECGKVFRHNSYLTKHRRVH), 309–331 (YKCNECGKAFSMHSNLTKHQIIH), 337–359 (FKCNECVKVFTQYSHLANHRRIH), 365–387 (YRCDECGKAFSVRSSLTTHQAIH), 393–415 (YKCNDCGKVFTQNSHLASHRGIH), 421–443 (YKCDECGKAFSQTSQLARHWRVH), 449–471 (YKCNECGKAFSVHSSLTTHQTIH), 477–499 (YKCNDCGKVFRHNSYLAVHQRIH), 505–527 (YKCNECGKAFSVHSNLATHQVIH), 533–555 (YKCNECGKVFTQNSHLANHRRIH), 561–583 (YRCNECGKAFSVRSTLTTHMAIH), and 589–611 (YKCNECGKVFTQNSNLAKHRRIH).

Belongs to the krueppel C2H2-type zinc-finger protein family.

It is found in the nucleus. May be involved in transcriptional regulation. The protein is Zinc finger protein 665 (ZNF665) of Pongo abelii (Sumatran orangutan).